The sequence spans 313 residues: Porphobilinogen deaminase (313 aa).

Residue Cys242 is modified to S-(dipyrrolylmethanemethyl)cysteine.

It belongs to the HMBS family. As to quaternary structure, monomer. Requires dipyrromethane as cofactor.

The enzyme catalyses 4 porphobilinogen + H2O = hydroxymethylbilane + 4 NH4(+). The protein operates within porphyrin-containing compound metabolism; protoporphyrin-IX biosynthesis; coproporphyrinogen-III from 5-aminolevulinate: step 2/4. Its function is as follows. Tetrapolymerization of the monopyrrole PBG into the hydroxymethylbilane pre-uroporphyrinogen in several discrete steps. In Yersinia enterocolitica serotype O:8 / biotype 1B (strain NCTC 13174 / 8081), this protein is Porphobilinogen deaminase.